A 238-amino-acid polypeptide reads, in one-letter code: Pyridoxine 5'-phosphate synthase (238 aa).

Residue Asn7 coordinates 3-amino-2-oxopropyl phosphate. Residue 9–10 participates in 1-deoxy-D-xylulose 5-phosphate binding; that stretch reads DH. Residue Arg18 participates in 3-amino-2-oxopropyl phosphate binding. The active-site Proton acceptor is His43. 1-deoxy-D-xylulose 5-phosphate contacts are provided by Arg45 and His50. Catalysis depends on Glu70, which acts as the Proton acceptor. Thr100 is a binding site for 1-deoxy-D-xylulose 5-phosphate. His191 acts as the Proton donor in catalysis. Residues Gly192 and 213–214 contribute to the 3-amino-2-oxopropyl phosphate site; that span reads GH.

This sequence belongs to the PNP synthase family. As to quaternary structure, homooctamer; tetramer of dimers.

It is found in the cytoplasm. The enzyme catalyses 3-amino-2-oxopropyl phosphate + 1-deoxy-D-xylulose 5-phosphate = pyridoxine 5'-phosphate + phosphate + 2 H2O + H(+). The protein operates within cofactor biosynthesis; pyridoxine 5'-phosphate biosynthesis; pyridoxine 5'-phosphate from D-erythrose 4-phosphate: step 5/5. Its function is as follows. Catalyzes the complicated ring closure reaction between the two acyclic compounds 1-deoxy-D-xylulose-5-phosphate (DXP) and 3-amino-2-oxopropyl phosphate (1-amino-acetone-3-phosphate or AAP) to form pyridoxine 5'-phosphate (PNP) and inorganic phosphate. The polypeptide is Pyridoxine 5'-phosphate synthase (Syntrophobacter fumaroxidans (strain DSM 10017 / MPOB)).